A 361-amino-acid polypeptide reads, in one-letter code: MGFIDGKWAPMIVLIVSNMIAGMVNALVKKVLDGGINHMVIATYRLGISTLFLLPVAYFWERKTRPKLTLSISCQLFVSALFGASLMQYFYLLGLSYTSATLGSAFWAIMPSLTFVMALIFGFEKLSLKTKIGYGVVLGTLISLVGGLLLTMYQGIPLTNSPEQAANSNNHTGHENWIKGCFFLLTGVVLFSSWMLIQAKINVKYPCPYSSTVILSVFGTLQCALLSLIKTRHLEDWILRDELTIITVVIAGVVAQGMCTVGMSWCIKQQGPVVSSSFSPVVLMSATVFDFLILHREIYLGSVIGSVVVVIGLYIFLWSRSKQIVECKIMKLPTNTVEEEKEEEGRTNVNNGQLLVIPMTP.

A run of 10 helical transmembrane segments spans residues tryptophan 8–valine 28, valine 40–tryptophan 60, leucine 76–serine 96, glycine 103–phenylalanine 123, isoleucine 132–methionine 152, tryptophan 177–isoleucine 197, tyrosine 209–isoleucine 229, leucine 243–methionine 263, valine 273–isoleucine 293, and isoleucine 298–tryptophan 318. EamA domains follow at residues alanine 21 to isoleucine 142 and tryptophan 194 to leucine 317.

The protein belongs to the drug/metabolite transporter (DMT) superfamily. Plant drug/metabolite exporter (P-DME) (TC 2.A.7.4) family.

The protein localises to the membrane. The protein is WAT1-related protein At4g01450 of Arabidopsis thaliana (Mouse-ear cress).